A 280-amino-acid polypeptide reads, in one-letter code: MSGLNLTVRVHPVVLFQVVDAFERRNADSHRVIGTLLGSVDKGVVEVTNCFCVPHKEHDDQVEAELSYALDMYDLNRKVNANENVVGWWATGNEVTNHSSVIHEYYARECNNPVHLTVDTSLQSGRMGLRAYICIQLGVPGGKTGCMFTPIPVELTSYEPETFGLKLLQKTVTVSPAHRPKTVAPMLDLAQISEAATKLQSLLDLILKYVDDVIAHKVTPDNAVGRQLLDLIHSVPHMTHEQFTQMFNANVRDLLMVITLSQLIKTQLQLNEKLTFLPTA.

One can recognise an MPN domain in the interval 8 to 138 (VRVHPVVLFQ…LRAYICIQLG (131 aa)).

It belongs to the eIF-3 subunit F family. As to quaternary structure, component of the eukaryotic translation initiation factor 3 (eIF-3) complex. The eIF-3 complex interacts with pix.

Its subcellular location is the cytoplasm. Its function is as follows. Component of the eukaryotic translation initiation factor 3 (eIF-3) complex, which is involved in protein synthesis of a specialized repertoire of mRNAs and, together with other initiation factors, stimulates binding of mRNA and methionyl-tRNAi to the 40S ribosome. The eIF-3 complex specifically targets and initiates translation of a subset of mRNAs involved in cell proliferation. The polypeptide is Eukaryotic translation initiation factor 3 subunit F-1 (Drosophila mojavensis (Fruit fly)).